Consider the following 323-residue polypeptide: D-specific alpha-keto acid dehydrogenase (323 aa).

NAD(+) is bound by residues 157–158 (HI), 230–232 (TGR), and D256. Residue R232 is part of the active site. Residue E261 is part of the active site. H293 acts as the Proton donor in catalysis. NAD(+) is bound at residue 293–296 (HTAY).

Belongs to the D-isomer specific 2-hydroxyacid dehydrogenase family.

In terms of biological role, required for high-level resistance to glycopeptides antibiotics. Catalyzes the reduction of 2-keto acids to 2-D-hydroxy acids that give rise to peptidoglycan precursors that terminate in the depsipeptide D-alanine-2-lactate rather than the dipeptide D-alanine-D-alanine thus preventing vancomycin binding. The polypeptide is D-specific alpha-keto acid dehydrogenase (vanHB) (Enterococcus faecalis (strain ATCC 700802 / V583)).